A 332-amino-acid chain; its full sequence is Glycerol-3-phosphate dehydrogenase [NAD(P)+] (332 aa).

3 residues coordinate NADPH: tryptophan 11, arginine 30, and lysine 108. Sn-glycerol 3-phosphate contacts are provided by lysine 108, glycine 137, and serine 139. Alanine 141 is a binding site for NADPH. Sn-glycerol 3-phosphate contacts are provided by lysine 192, aspartate 245, serine 255, arginine 256, and asparagine 257. Residue lysine 192 is the Proton acceptor of the active site. Arginine 256 is a binding site for NADPH. NADPH-binding residues include valine 280 and glutamate 282.

It belongs to the NAD-dependent glycerol-3-phosphate dehydrogenase family.

The protein resides in the cytoplasm. The enzyme catalyses sn-glycerol 3-phosphate + NAD(+) = dihydroxyacetone phosphate + NADH + H(+). It catalyses the reaction sn-glycerol 3-phosphate + NADP(+) = dihydroxyacetone phosphate + NADPH + H(+). It participates in membrane lipid metabolism; glycerophospholipid metabolism. In terms of biological role, catalyzes the reduction of the glycolytic intermediate dihydroxyacetone phosphate (DHAP) to sn-glycerol 3-phosphate (G3P), the key precursor for phospholipid synthesis. The protein is Glycerol-3-phosphate dehydrogenase [NAD(P)+] of Burkholderia orbicola (strain MC0-3).